The primary structure comprises 393 residues: Stearoyl-[acyl-carrier-protein] 9-desaturase, chloroplastic (393 aa).

A chloroplast-targeting transit peptide spans 1–30 (MALNFNSPTFQSIKTTRRPCSPLRSPRVFM). Residues glutamate 135, glutamate 173, histidine 176, glutamate 226, glutamate 259, and histidine 262 each contribute to the Fe cation site.

Belongs to the fatty acid desaturase type 2 family. As to quaternary structure, homodimer. Fe(2+) serves as cofactor.

It is found in the plastid. The protein resides in the chloroplast. The enzyme catalyses octadecanoyl-[ACP] + 2 reduced [2Fe-2S]-[ferredoxin] + O2 + 2 H(+) = (9Z)-octadecenoyl-[ACP] + 2 oxidized [2Fe-2S]-[ferredoxin] + 2 H2O. Its pathway is lipid metabolism; fatty acid metabolism. Its function is as follows. Converts stearoyl-ACP to oleoyl-ACP by introduction of a cis double bond between carbons 9 and 10 of the acyl chain. The protein is Stearoyl-[acyl-carrier-protein] 9-desaturase, chloroplastic of Solanum commersonii (Commerson's wild potato).